We begin with the raw amino-acid sequence, 95 residues long: Small ribosomal subunit protein uS15 (95 aa).

Belongs to the universal ribosomal protein uS15 family. As to quaternary structure, part of the 30S ribosomal subunit. Forms a bridge to the 50S subunit in the 70S ribosome, contacting the 23S rRNA.

Functionally, one of the primary rRNA binding proteins, it binds directly to 16S rRNA where it helps nucleate assembly of the platform of the 30S subunit by binding and bridging several RNA helices of the 16S rRNA. Its function is as follows. Forms an intersubunit bridge (bridge B4) with the 23S rRNA of the 50S subunit in the ribosome. The protein is Small ribosomal subunit protein uS15 of Sulfurihydrogenibium sp. (strain YO3AOP1).